Consider the following 114-residue polypeptide: MICOS complex subunit MIC12 (114 aa).

Residues 4–26 (IAKLGSFTLVSGVVATSCYYYFI) traverse the membrane as a helical segment.

Belongs to the MICOS complex subunit Mic12 family. As to quaternary structure, component of the mitochondrial contact site and cristae organizing system (MICOS) complex.

The protein localises to the mitochondrion inner membrane. Its function is as follows. Component of the MICOS complex, a large protein complex of the mitochondrial inner membrane that plays crucial roles in the maintenance of crista junctions, inner membrane architecture, and formation of contact sites to the outer membrane. The chain is MICOS complex subunit MIC12 (AIM5) from Candida glabrata (strain ATCC 2001 / BCRC 20586 / JCM 3761 / NBRC 0622 / NRRL Y-65 / CBS 138) (Yeast).